The chain runs to 290 residues: Cilia- and flagella-associated protein 298-A (290 aa).

It belongs to the CFAP298 family.

Its subcellular location is the cytoplasm. The protein resides in the cytoskeleton. It is found in the cilium basal body. Plays a role in motile cilium function, possibly by acting on outer dynein arm assembly. Seems to be important for initiation rather than maintenance of cilium motility. Required for correct positioning of the cilium at the apical cell surface, suggesting an additional role in the planar cell polarity (PCP) pathway. May suppress canonical Wnt signaling activity. In Xenopus laevis (African clawed frog), this protein is Cilia- and flagella-associated protein 298-A (cfap298-a).